The sequence spans 156 residues: MSPLVAVLVFFSAALGVPGPGVAGNPRGLDAIFEAPVTPAPPTRHPRREELEWDDEDHPLLDLEPPVGSRCHPYIAYSLPPDMNAVTSVVVKPYCSPPEVILWASGTAYLVNPFVAIQALAVGEPLNEAALKELGEVAVHKDSLPPLRYNGGPPAE.

The signal sequence occupies residues 1–16 (MSPLVAVLVFFSAALG). In terms of domain architecture, gL alphaherpesvirus-type spans 50 to 156 (ELEWDDEDHP…LRYNGGPPAE (107 aa)). The cysteines at positions 71 and 95 are disulfide-linked.

Belongs to the herpesviridae glycoprotein L (gL) family. Alphaherpesvirinae gL subfamily. Interacts with glycoprotein H (gH); this interaction is necessary for the correct processing and cell surface expression of gH. The heterodimer gH/gL seems to interact with gB trimers during fusion. In terms of processing, O-glycosylated, and sialylated.

The protein resides in the virion membrane. The protein localises to the host cell membrane. Its subcellular location is the host Golgi apparatus. It is found in the host trans-Golgi network. Functionally, the heterodimer glycoprotein H-glycoprotein L is required for the fusion of viral and plasma membranes leading to virus entry into the host cell. Acts as a functional inhibitor of gH and maintains gH in an inhibited form. Upon binding to host integrins, gL dissociates from gH leading to activation of the viral fusion glycoproteins gB and gH. This is Envelope glycoprotein L from Suid herpesvirus 1 (strain Indiana-Funkhauser / Becker) (SuHV-1).